The chain runs to 488 residues: Inosine-5'-monophosphate dehydrogenase (488 aa).

CBS domains lie at valine 95–isoleucine 153 and methionine 157–serine 214. Residues aspartate 251 and glycine 301–glycine 303 contribute to the NAD(+) site. K(+)-binding residues include glycine 303 and glycine 305. An IMP-binding site is contributed by serine 306. Cysteine 308 lines the K(+) pocket. The active-site Thioimidate intermediate is cysteine 308. Residues aspartate 341–glycine 343, glycine 364–serine 365, and tyrosine 388–glycine 392 each bind IMP. Arginine 404 acts as the Proton acceptor in catalysis. Glutamate 416 provides a ligand contact to IMP. K(+) is bound by residues glutamate 470, serine 471, and histidine 472.

It belongs to the IMPDH/GMPR family. In terms of assembly, homotetramer. K(+) is required as a cofactor.

It catalyses the reaction IMP + NAD(+) + H2O = XMP + NADH + H(+). The protein operates within purine metabolism; XMP biosynthesis via de novo pathway; XMP from IMP: step 1/1. Its activity is regulated as follows. Mycophenolic acid (MPA) is a non-competitive inhibitor that prevents formation of the closed enzyme conformation by binding to the same site as the amobile flap. In contrast, mizoribine monophosphate (MZP) is a competitive inhibitor that induces the closed conformation. MPA is a potent inhibitor of mammalian IMPDHs but a poor inhibitor of the bacterial enzymes. MZP is a more potent inhibitor of bacterial IMPDH. In terms of biological role, catalyzes the conversion of inosine 5'-phosphate (IMP) to xanthosine 5'-phosphate (XMP), the first committed and rate-limiting step in the de novo synthesis of guanine nucleotides, and therefore plays an important role in the regulation of cell growth. This Bacillus subtilis (strain 168) protein is Inosine-5'-monophosphate dehydrogenase.